We begin with the raw amino-acid sequence, 149 residues long: Endoribonuclease YbeY (149 aa).

His-113, His-117, and His-123 together coordinate Zn(2+).

It belongs to the endoribonuclease YbeY family. The cofactor is Zn(2+).

The protein localises to the cytoplasm. Functionally, single strand-specific metallo-endoribonuclease involved in late-stage 70S ribosome quality control and in maturation of the 3' terminus of the 16S rRNA. This chain is Endoribonuclease YbeY, found in Saccharophagus degradans (strain 2-40 / ATCC 43961 / DSM 17024).